Reading from the N-terminus, the 480-residue chain is Probable glycosyltransferase At5g25310 (480 aa).

The Cytoplasmic portion of the chain corresponds to 1–10; that stretch reads MDKFQSKFTR. The helical; Signal-anchor for type II membrane protein transmembrane segment at 11 to 31 threads the bilayer; that stretch reads FGFISICFGSIALVLLISHCS. The Lumenal segment spans residues 32–480; the sequence is TSFFDYSFQK…WLRRLNLKLT (449 aa). Residues asparagine 85, asparagine 120, asparagine 243, asparagine 271, and asparagine 281 are each glycosylated (N-linked (GlcNAc...) asparagine).

This sequence belongs to the glycosyltransferase 47 family.

It localises to the golgi apparatus membrane. Its function is as follows. May be involved in cell wall biosynthesis. This is Probable glycosyltransferase At5g25310 from Arabidopsis thaliana (Mouse-ear cress).